The chain runs to 571 residues: Potassium-transporting ATPase potassium-binding subunit (571 aa).

10 helical membrane passes run Leu-7–Leu-27, Thr-66–Ala-86, Gly-137–Ile-157, Phe-188–Val-208, Ile-255–Phe-275, Trp-286–Phe-306, Val-390–Val-410, Thr-430–Ile-450, Ile-497–Gly-517, and Leu-538–Ala-558.

It belongs to the KdpA family. In terms of assembly, the system is composed of three essential subunits: KdpA, KdpB and KdpC.

The protein localises to the cell membrane. Its function is as follows. Part of the high-affinity ATP-driven potassium transport (or Kdp) system, which catalyzes the hydrolysis of ATP coupled with the electrogenic transport of potassium into the cytoplasm. This subunit binds the extracellular potassium ions and delivers the ions to the membrane domain of KdpB through an intramembrane tunnel. This is Potassium-transporting ATPase potassium-binding subunit from Mycobacterium bovis (strain ATCC BAA-935 / AF2122/97).